The following is a 352-amino-acid chain: S-adenosylmethionine:tRNA ribosyltransferase-isomerase (352 aa).

The protein belongs to the QueA family. In terms of assembly, monomer.

The protein resides in the cytoplasm. It catalyses the reaction 7-aminomethyl-7-carbaguanosine(34) in tRNA + S-adenosyl-L-methionine = epoxyqueuosine(34) in tRNA + adenine + L-methionine + 2 H(+). It participates in tRNA modification; tRNA-queuosine biosynthesis. Functionally, transfers and isomerizes the ribose moiety from AdoMet to the 7-aminomethyl group of 7-deazaguanine (preQ1-tRNA) to give epoxyqueuosine (oQ-tRNA). The protein is S-adenosylmethionine:tRNA ribosyltransferase-isomerase of Vibrio cholerae serotype O1 (strain ATCC 39541 / Classical Ogawa 395 / O395).